We begin with the raw amino-acid sequence, 209 residues long: Ribonuclease HII (209 aa).

Residues 20 to 209 (QLEIGIDEVG…KSFLTKLNLI (190 aa)) form the RNase H type-2 domain. A divalent metal cation-binding residues include D26, E27, and D122.

Belongs to the RNase HII family. Requires Mn(2+) as cofactor. Mg(2+) serves as cofactor.

It is found in the cytoplasm. It catalyses the reaction Endonucleolytic cleavage to 5'-phosphomonoester.. Endonuclease that specifically degrades the RNA of RNA-DNA hybrids. The polypeptide is Ribonuclease HII (Prochlorococcus marinus (strain MIT 9515)).